A 411-amino-acid chain; its full sequence is Lissencephaly-1 homolog (411 aa).

A LisH domain is found at 9–41 (QREELNQAIADYLGSNGYADSLETFRKEADLST). Residues 56-83 (TSVIRLQKKVMELEAKLTEAEKEVIEGA) are a coiled coil. WD repeat units follow at residues 106–147 (GHRA…RSLK), 148–187 (GHTD…ECIK), 191–230 (GHDH…CVKT), 233–272 (GHRE…CKVE), 275–334 (DHEH…CLLT), 337–376 (GHDN…CMKT), and 379–411 (AHQH…WECR).

It belongs to the WD repeat LIS1/nudF family.

It is found in the cytoplasm. The protein localises to the cytoskeleton. Its subcellular location is the microtubule organizing center. It localises to the centrosome. Functionally, positively regulates the activity of the minus-end directed microtubule motor protein dynein. May enhance dynein-mediated microtubule sliding by targeting dynein to the microtubule plus end. Required for several dynein- and microtubule-dependent processes. The sequence is that of Lissencephaly-1 homolog from Drosophila sechellia (Fruit fly).